The primary structure comprises 625 residues: Dual specificity protein phosphatase 8 (625 aa).

A Rhodanese domain is found at 23–138 (GPGGPLVIDS…FSSCFPGLCE (116 aa)). Residues 160-302 (GLTRILPHLY…LLEYERSLKL (143 aa)) enclose the Tyrosine-protein phosphatase domain. Cys-246 acts as the Phosphocysteine intermediate in catalysis. The tract at residues 306–586 (LQGDPGTPSG…PAPETQFKRR (281 aa)) is disordered. A compositionally biased stretch (basic and acidic residues) spans 380 to 389 (SSDRLQDTNR). Over residues 431–448 (AALGLSSPSPDSPDAAPE) the composition is skewed to low complexity. The span at 555–570 (DLRRREAARAEPRDAR) shows a compositional bias: basic and acidic residues.

It belongs to the protein-tyrosine phosphatase family. Non-receptor class dual specificity subfamily. As to quaternary structure, monomer. Abundant in brain, heart and skeletal muscle.

The protein localises to the cytoplasm. It is found in the nucleus. The enzyme catalyses O-phospho-L-tyrosyl-[protein] + H2O = L-tyrosyl-[protein] + phosphate. The catalysed reaction is O-phospho-L-seryl-[protein] + H2O = L-seryl-[protein] + phosphate. It catalyses the reaction O-phospho-L-threonyl-[protein] + H2O = L-threonyl-[protein] + phosphate. In terms of biological role, has phosphatase activity with synthetic phosphatase substrates and negatively regulates mitogen-activated protein kinase activity, presumably by catalysing their dephosphorylation. Expected to display protein phosphatase activity toward phosphotyrosine, phosphoserine and phosphothreonine residues. The sequence is that of Dual specificity protein phosphatase 8 (DUSP8) from Homo sapiens (Human).